The chain runs to 89 residues: Large ribosomal subunit protein bL28 (89 aa).

It belongs to the bacterial ribosomal protein bL28 family.

In Chlamydia trachomatis serovar A (strain ATCC VR-571B / DSM 19440 / HAR-13), this protein is Large ribosomal subunit protein bL28.